A 264-amino-acid chain; its full sequence is MHFAALAILSSLVASAAAHTRVWGVWVNGVDQGDGRDIYIRSPPTNDPVVNLTDPAMACNVDNRVVPQWVSVKSNDSLTFEWYHNTRDDDIIASSHHGPIAVYVAPAASNGSGPVWVKIFDDTYTTSWAVDRLITAHGQHTVIVPDIPAGDYLFRAEINALHQADVLYDQDPLRGAQFYISCAQITITPGGDETLPAGIALPGAYTDSTPGIVWNLYNGSDPTEYVAPGPPVWTDALGGSIALVGIPVLPNTTSSAGVAPTGAA.

A signal peptide spans 1 to 18 (MHFAALAILSSLVASAAA). A Cu(2+)-binding site is contributed by His-19. 2 N-linked (GlcNAc...) asparagine glycosylation sites follow: Asn-51 and Asn-75. Cysteines 59 and 182 form a disulfide. His-96 provides a ligand contact to Cu(2+). A glycan (N-linked (GlcNAc...) asparagine) is linked at Asn-110. His-162 lines the O2 pocket. Residue Tyr-179 coordinates Cu(2+). 2 N-linked (GlcNAc...) asparagine glycosylation sites follow: Asn-218 and Asn-251.

Belongs to the polysaccharide monooxygenase AA9 family. The cofactor is Cu(2+).

It localises to the secreted. The catalysed reaction is [(1-&gt;4)-beta-D-glucosyl]n+m + reduced acceptor + O2 = 4-dehydro-beta-D-glucosyl-[(1-&gt;4)-beta-D-glucosyl]n-1 + [(1-&gt;4)-beta-D-glucosyl]m + acceptor + H2O.. Functionally, lytic polysaccharide monooxygenase (LPMO) that depolymerizes crystalline and amorphous polysaccharides via the oxidation of scissile alpha- or beta-(1-4)-glycosidic bonds, yielding C4 oxidation products. Catalysis by LPMOs requires the reduction of the active-site copper from Cu(II) to Cu(I) by a reducing agent and H(2)O(2) or O(2) as a cosubstrate. Active on cellulose and cello-oligosaccharides, as well as plant cell wall-derived hemicellulosic polysaccharides. Also active on cello-oligosaccharides such as cellohexaose, cellopentaose or cellotetraose. In Phanerochaete carnosa (strain HHB-10118-sp) (White-rot fungus), this protein is AA9 family lytic polysaccharide monooxygenase A.